Here is a 517-residue protein sequence, read N- to C-terminus: MAVSRRRVPQAGARSFFCALLLSFSQFTGSDGTGGDAAAPGAAGTQAELPHRRFEYKYSFKGPHLVQSDGTVPFWAHAGNAIPSADQIRIAPSLKSQRGSVWTKAKAAFENWEVEVTFRVTGRGRIGADGLAIWYTENQGLDGPVFGSADTWNGVGIFFDSFDNDGKKNNPAIVVIGNNGQINYDHQNDGATQALASCQRDFRNKPYPVRAKITYYQKTLTVMINNGFTPDKNDYEFCAKVENMVIPTQGHFGISAATGGLADDHDVLSFLTFQLTEPGKEPPTAEKDISEKEKEKYQEEFEHFQQELDKKKEEFQKGHPDLQGQPADDIFESIGDRELRQVFEGQNRIHLEIKQLNRQLDMILDEQRRYVSSLTEEISRRGAGTPGQPGQVSQQELDTVVKSQQEILRQVNEVKNSMSETVRLVSGIQHPGSAGVYETTQHFMDIKEHLHVVKRDIDSLAQRSMPSNEKPKCPDLPPFPSCLSTIHFVIFVVVQTVLFVGYIMYRTQQEAAAKKFF.

The N-terminal stretch at 1-30 (MAVSRRRVPQAGARSFFCALLLSFSQFTGS) is a signal peptide. The Lumenal portion of the chain corresponds to 31 to 484 (DGTGGDAAAP…DLPPFPSCLS (454 aa)). The region spanning 52 to 275 (RRFEYKYSFK…DVLSFLTFQL (224 aa)) is the L-type lectin-like domain. 2 residues coordinate a carbohydrate: Ser96 and Asp129. Residues Asp160, Phe162, and Asn164 each contribute to the Ca(2+) site. 2 residues coordinate a carbohydrate: Asn164 and His186. Ca(2+) is bound at residue Asp189. Cysteines 198 and 238 form a disulfide. Residue 259-261 (GGL) participates in a carbohydrate binding. A Phosphoserine modification is found at Ser433. The helical transmembrane segment at 485–505 (TIHFVIFVVVQTVLFVGYIMY) threads the bilayer. The Cytoplasmic portion of the chain corresponds to 506–517 (RTQQEAAAKKFF). Residues 506–517 (RTQQEAAAKKFF) form a mediates interaction with RAB3GAP1, RAB3GAP2 and UBXN6 region. An ER export motif motif is present at residues 516–517 (FF).

As to quaternary structure, exists both as a covalent disulfide-linked homohexamer, and a complex of three disulfide-linked dimers non-covalently kept together. Interacts with MCFD2. May interact with TMEM115. Interacts with RAB3GAP1 and RAB3GAP2. Interacts with UBXN6. Interacts with SERPINA1/alpha1-antitrypsin. Interacts with BET1.

Its subcellular location is the endoplasmic reticulum-Golgi intermediate compartment membrane. The protein localises to the golgi apparatus membrane. It localises to the endoplasmic reticulum membrane. In terms of biological role, mannose-specific lectin. May recognize sugar residues of glycoproteins, glycolipids, or glycosylphosphatidyl inositol anchors and may be involved in the sorting or recycling of proteins, lipids, or both. The LMAN1-MCFD2 complex forms a specific cargo receptor for the ER-to-Golgi transport of selected proteins. The chain is Protein ERGIC-53 (Lman1) from Mus musculus (Mouse).